The primary structure comprises 467 residues: Cysteine--tRNA ligase (467 aa).

Cys-28 provides a ligand contact to Zn(2+). A 'HIGH' region motif is present at residues 30-40 (MTVYDHCHLGH). 3 residues coordinate Zn(2+): Cys-209, His-234, and Glu-238. Positions 266–270 (KMSKS) match the 'KMSKS' region motif. Lys-269 is a binding site for ATP.

Belongs to the class-I aminoacyl-tRNA synthetase family. Monomer. Requires Zn(2+) as cofactor.

The protein localises to the cytoplasm. It carries out the reaction tRNA(Cys) + L-cysteine + ATP = L-cysteinyl-tRNA(Cys) + AMP + diphosphate. This is Cysteine--tRNA ligase from Nitrosomonas eutropha (strain DSM 101675 / C91 / Nm57).